Consider the following 1122-residue polypeptide: Desmoglein-2 (1122 aa).

A signal peptide spans 1–28 (MARSPGDRCALLLLVQLLAVVCLDFGNG). A propeptide spanning residues 29 to 54 (LHLEVFSPRNEGKPFPKHTHLVRQKR) is cleaved from the precursor. Cadherin domains are found at residues 55–164 (AWIT…EPVF), 165–277 (TQEV…IPVV), 278–398 (ENKM…SSVV), and 397–504 (VVSF…CPVL). Residues 55–618 (AWITAPVALR…YDNYVGLGPA (564 aa)) are Extracellular-facing. Residue Asn-117 is glycosylated (N-linked (GlcNAc...) asparagine). 3 N-linked (GlcNAc...) asparagine glycosylation sites follow: Asn-314, Asn-467, and Asn-519. Residues 619 to 639 (AIALMILALLLLLLVPLLLLI) traverse the membrane as a helical segment. At 640 to 1122 (CHCGGGAKGF…KHSTMQHSYS (483 aa)) the chain is on the cytoplasmic side. 4 positions are modified to phosphoserine: Ser-685, Ser-706, Ser-709, and Ser-729. Residue Thr-808 is modified to Phosphothreonine. Residues Ser-810, Ser-814, and Ser-819 each carry the phosphoserine modification. 6 Desmoglein repeat repeats span residues 885–916 (AYSS…ESSV), 917–945 (SSRQ…SYAK), 946–971 (GSAV…ERVY), 972–995 (APTS…ERVI), 996–1024 (QPNG…ERES), and 1025–1055 (ILAP…ERIL). The segment at 913-932 (ESSVSSRQSQKVVPPPDPVA) is disordered. Positions 914 to 924 (SSVSSRQSQKV) are enriched in low complexity. The segment at 1089–1122 (LPNLDLEESDRPNSTITTSSTRVTKHSTMQHSYS) is disordered. Residues 1100-1122 (PNSTITTSSTRVTKHSTMQHSYS) are compositionally biased toward polar residues. Ser-1122 carries the phosphoserine modification.

Interacts with PKP2. Interacts with CTNNB1; the interaction promotes localization of CTNNB1 at cell junctions thus reducing its nuclear localization and subsequent transcription of CTNNB1/TCF-target genes. Post-translationally, palmitoylated by ZDHHC5 at the plasma membrane. As to expression, expressed in undifferentiated pluripotent stem cells, expression decreases during differentiation (at protein level). Expressed by embryonic stem cells, expression is reduced during differentiation (at protein level). Expressed at the apical-lateral cell membrane of kidney tubular epithelial cells (at protein level). Expressed in epidermis and heart (at protein level). Expressed in the brain, spleen, lung, liver skeletal muscle, kidney and testis.

The protein resides in the cell membrane. The protein localises to the cell junction. It localises to the desmosome. It is found in the cytoplasm. A component of desmosome cell-cell junctions which are required for positive regulation of cellular adhesion. Involved in the interaction of plaque proteins and intermediate filaments mediating cell-cell adhesion. Required for proliferation and viability of embryonic stem cells in the blastocyst, thereby crucial for progression of post-implantation embryonic development. Maintains pluripotency by regulating epithelial to mesenchymal transition/mesenchymal to epithelial transition (EMT/MET) via interacting with and sequestering CTNNB1 to sites of cell-cell contact, thereby reducing translocation of CTNNB1 to the nucleus and subsequent transcription of CTNNB1/TCF-target genes. Promotes pluripotency and the multi-lineage differentiation potential of hematopoietic stem cells. Plays a role in endothelial cell sprouting and elongation via mediating the junctional-association of cortical actin fibers and CDH5. Plays a role in limiting inflammatory infiltration and the apoptotic response to injury in kidney tubular epithelial cells, potentially via its role in maintaining cell-cell adhesion and the epithelial barrier. The protein is Desmoglein-2 (Dsg2) of Mus musculus (Mouse).